The following is a 335-amino-acid chain: Legumin type B (335 aa).

2 disordered regions span residues 47–87 (PETQ…GNSV) and 102–155 (TEED…GRNG). Basic and acidic residues predominate over residues 105-118 (DTAKRLRSPRDKRN). A compositionally biased stretch (acidic residues) spans 135–144 (QQEEEEQEEE). Residues 167–314 (ENIAQPARAD…AFGLRQRQVT (148 aa)) form the Cupin type-1 domain.

Belongs to the 11S seed storage protein (globulins) family. Hexamer; each subunit is composed of an acidic and a basic chain derived from a single precursor and linked by a disulfide bond.

Functionally, this protein found in the seeds of many leguminous and non-leguminous plants is the source of sulfur-containing amino acids in seed meals. This is Legumin type B (LEB7) from Vicia faba (Broad bean).